The primary structure comprises 491 residues: Protein nucleotidyltransferase YdiU (491 aa).

ATP contacts are provided by Gly-94, Gly-96, Arg-97, Lys-117, Asp-129, Gly-130, Arg-180, and Arg-187. The Proton acceptor role is filled by Asp-256. Mg(2+)-binding residues include Asn-257 and Asp-266. Position 266 (Asp-266) interacts with ATP.

The protein belongs to the SELO family. Mg(2+) serves as cofactor. The cofactor is Mn(2+).

The catalysed reaction is L-seryl-[protein] + ATP = 3-O-(5'-adenylyl)-L-seryl-[protein] + diphosphate. The enzyme catalyses L-threonyl-[protein] + ATP = 3-O-(5'-adenylyl)-L-threonyl-[protein] + diphosphate. It carries out the reaction L-tyrosyl-[protein] + ATP = O-(5'-adenylyl)-L-tyrosyl-[protein] + diphosphate. It catalyses the reaction L-histidyl-[protein] + UTP = N(tele)-(5'-uridylyl)-L-histidyl-[protein] + diphosphate. The catalysed reaction is L-seryl-[protein] + UTP = O-(5'-uridylyl)-L-seryl-[protein] + diphosphate. The enzyme catalyses L-tyrosyl-[protein] + UTP = O-(5'-uridylyl)-L-tyrosyl-[protein] + diphosphate. In terms of biological role, nucleotidyltransferase involved in the post-translational modification of proteins. It can catalyze the addition of adenosine monophosphate (AMP) or uridine monophosphate (UMP) to a protein, resulting in modifications known as AMPylation and UMPylation. The chain is Protein nucleotidyltransferase YdiU from Clostridium botulinum (strain Eklund 17B / Type B).